Here is a 369-residue protein sequence, read N- to C-terminus: Phosphoribosyl pyrophosphate synthase-associated protein 2 (369 aa).

An N-acetylmethionine modification is found at M1. T5 carries the post-translational modification Phosphothreonine. 3 positions are modified to phosphoserine: S219, S227, and S233.

The protein belongs to the ribose-phosphate pyrophosphokinase family. Binds to PRPS1 and PRPS2.

Functionally, seems to play a negative regulatory role in 5-phosphoribose 1-diphosphate synthesis. In Pongo abelii (Sumatran orangutan), this protein is Phosphoribosyl pyrophosphate synthase-associated protein 2 (PRPSAP2).